A 76-amino-acid polypeptide reads, in one-letter code: Protein RALF-like 30 (76 aa).

Positions 1 to 22 (MKAWVICLMVISIFMMIEPTLA) are cleaved as a signal peptide. Intrachain disulfides connect C37/C46 and C66/C72.

This sequence belongs to the plant rapid alkalinization factor (RALF) family.

Its subcellular location is the secreted. Functionally, cell signaling peptide that may regulate plant stress, growth, and development. Mediates a rapid alkalinization of extracellular space by mediating a transient increase in the cytoplasmic Ca(2+) concentration leading to a calcium-dependent signaling events through a cell surface receptor and a concomitant activation of some intracellular mitogen-activated protein kinases. The chain is Protein RALF-like 30 (RALFL30) from Arabidopsis thaliana (Mouse-ear cress).